Here is a 504-residue protein sequence, read N- to C-terminus: UDP-N-acetylmuramoylalanine--D-glutamate ligase (504 aa).

132–138 (GTNGKTT) lines the ATP pocket. Residues 286-295 (DRDASDEPAP) show a composition bias toward basic and acidic residues. The tract at residues 286 to 305 (DRDASDEPAPKRRRKNEVAT) is disordered.

The protein belongs to the MurCDEF family.

It is found in the cytoplasm. The catalysed reaction is UDP-N-acetyl-alpha-D-muramoyl-L-alanine + D-glutamate + ATP = UDP-N-acetyl-alpha-D-muramoyl-L-alanyl-D-glutamate + ADP + phosphate + H(+). It functions in the pathway cell wall biogenesis; peptidoglycan biosynthesis. Cell wall formation. Catalyzes the addition of glutamate to the nucleotide precursor UDP-N-acetylmuramoyl-L-alanine (UMA). The sequence is that of UDP-N-acetylmuramoylalanine--D-glutamate ligase from Paraburkholderia xenovorans (strain LB400).